Reading from the N-terminus, the 377-residue chain is Queuine tRNA-ribosyltransferase (377 aa).

Asp89 functions as the Proton acceptor in the catalytic mechanism. Substrate contacts are provided by residues 89 to 93 (DSGGF), Asp143, Gln187, and Gly214. Positions 245–251 (GVGKPED) are RNA binding. The active-site Nucleophile is Asp264. The segment at 269 to 273 (TRNAR) is RNA binding; important for wobble base 34 recognition. Residues Cys302, Cys304, Cys307, and His333 each coordinate Zn(2+).

The protein belongs to the queuine tRNA-ribosyltransferase family. As to quaternary structure, homodimer. Within each dimer, one monomer is responsible for RNA recognition and catalysis, while the other monomer binds to the replacement base PreQ1. Zn(2+) is required as a cofactor.

The enzyme catalyses 7-aminomethyl-7-carbaguanine + guanosine(34) in tRNA = 7-aminomethyl-7-carbaguanosine(34) in tRNA + guanine. It functions in the pathway tRNA modification; tRNA-queuosine biosynthesis. In terms of biological role, catalyzes the base-exchange of a guanine (G) residue with the queuine precursor 7-aminomethyl-7-deazaguanine (PreQ1) at position 34 (anticodon wobble position) in tRNAs with GU(N) anticodons (tRNA-Asp, -Asn, -His and -Tyr). Catalysis occurs through a double-displacement mechanism. The nucleophile active site attacks the C1' of nucleotide 34 to detach the guanine base from the RNA, forming a covalent enzyme-RNA intermediate. The proton acceptor active site deprotonates the incoming PreQ1, allowing a nucleophilic attack on the C1' of the ribose to form the product. After dissociation, two additional enzymatic reactions on the tRNA convert PreQ1 to queuine (Q), resulting in the hypermodified nucleoside queuosine (7-(((4,5-cis-dihydroxy-2-cyclopenten-1-yl)amino)methyl)-7-deazaguanosine). This is Queuine tRNA-ribosyltransferase from Shewanella denitrificans (strain OS217 / ATCC BAA-1090 / DSM 15013).